Consider the following 582-residue polypeptide: Aspartate--tRNA(Asp/Asn) ligase (582 aa).

Glu177 provides a ligand contact to L-aspartate. The segment at 201 to 204 is aspartate; that stretch reads QLFK. Arg223 contacts L-aspartate. Residues 223–225 and Gln232 each bind ATP; that span reads RDE. Residue His447 participates in L-aspartate binding. Glu481 is a binding site for ATP. Position 488 (Arg488) interacts with L-aspartate. 533-536 serves as a coordination point for ATP; that stretch reads GLDR.

This sequence belongs to the class-II aminoacyl-tRNA synthetase family. Type 1 subfamily. As to quaternary structure, homodimer.

It is found in the cytoplasm. It carries out the reaction tRNA(Asx) + L-aspartate + ATP = L-aspartyl-tRNA(Asx) + AMP + diphosphate. Its function is as follows. Aspartyl-tRNA synthetase with relaxed tRNA specificity since it is able to aspartylate not only its cognate tRNA(Asp) but also tRNA(Asn). Reaction proceeds in two steps: L-aspartate is first activated by ATP to form Asp-AMP and then transferred to the acceptor end of tRNA(Asp/Asn). In Chlamydia trachomatis serovar A (strain ATCC VR-571B / DSM 19440 / HAR-13), this protein is Aspartate--tRNA(Asp/Asn) ligase.